Here is a 263-residue protein sequence, read N- to C-terminus: 3-methyl-2-oxobutanoate hydroxymethyltransferase (263 aa).

Mg(2+) contacts are provided by Asp-45 and Asp-84. 3-methyl-2-oxobutanoate contacts are provided by residues 45 to 46, Asp-84, and Lys-112; that span reads DS. Residue Glu-114 participates in Mg(2+) binding. Glu-180 acts as the Proton acceptor in catalysis.

It belongs to the PanB family. As to quaternary structure, homodecamer; pentamer of dimers. Mg(2+) is required as a cofactor.

Its subcellular location is the cytoplasm. It catalyses the reaction 3-methyl-2-oxobutanoate + (6R)-5,10-methylene-5,6,7,8-tetrahydrofolate + H2O = 2-dehydropantoate + (6S)-5,6,7,8-tetrahydrofolate. It functions in the pathway cofactor biosynthesis; (R)-pantothenate biosynthesis; (R)-pantoate from 3-methyl-2-oxobutanoate: step 1/2. In terms of biological role, catalyzes the reversible reaction in which hydroxymethyl group from 5,10-methylenetetrahydrofolate is transferred onto alpha-ketoisovalerate to form ketopantoate. The protein is 3-methyl-2-oxobutanoate hydroxymethyltransferase of Enterobacter sp. (strain 638).